We begin with the raw amino-acid sequence, 158 residues long: Lipoprotein signal peptidase (158 aa).

The next 4 helical transmembrane spans lie at 7–27 (LFWIAAFIAFFLDQITKYWVV), 38–58 (LLTGIFHFTYVTNTGAAFSLL), 68–88 (LSLGVSLVLIALALFGPTLNL), and 92–112 (LGYGLILGGAMGNGIDRFVLG). Active-site residues include Asp-116 and Asp-132. A helical membrane pass occupies residues 125–145 (FPVFNVADSFISIGIVFLLIA).

This sequence belongs to the peptidase A8 family.

The protein localises to the cell inner membrane. The catalysed reaction is Release of signal peptides from bacterial membrane prolipoproteins. Hydrolyzes -Xaa-Yaa-Zaa-|-(S,diacylglyceryl)Cys-, in which Xaa is hydrophobic (preferably Leu), and Yaa (Ala or Ser) and Zaa (Gly or Ala) have small, neutral side chains.. It functions in the pathway protein modification; lipoprotein biosynthesis (signal peptide cleavage). This protein specifically catalyzes the removal of signal peptides from prolipoproteins. The chain is Lipoprotein signal peptidase from Nostoc punctiforme (strain ATCC 29133 / PCC 73102).